A 728-amino-acid polypeptide reads, in one-letter code: Elongation factor 2 (728 aa).

A tr-type G domain is found at 19–261 (EQIRNIAIAA…MVAEHFPNPI (243 aa)). Residues 28 to 35 (AHVDHGKT), 94 to 98 (DTPGH), and 148 to 151 (NKVD) each bind GTP. H596 is subject to Diphthamide.

The protein belongs to the TRAFAC class translation factor GTPase superfamily. Classic translation factor GTPase family. EF-G/EF-2 subfamily.

It localises to the cytoplasm. Its function is as follows. Catalyzes the GTP-dependent ribosomal translocation step during translation elongation. During this step, the ribosome changes from the pre-translocational (PRE) to the post-translocational (POST) state as the newly formed A-site-bound peptidyl-tRNA and P-site-bound deacylated tRNA move to the P and E sites, respectively. Catalyzes the coordinated movement of the two tRNA molecules, the mRNA and conformational changes in the ribosome. The protein is Elongation factor 2 of Halobacterium salinarum (strain ATCC 29341 / DSM 671 / R1).